The sequence spans 1106 residues: DNA polymerase delta catalytic subunit (1106 aa).

Positions 1–28 (MDGKRRPGPGPGVPPKRARGGLWDEDEA) are disordered. Residues 4–19 (KRRPGPGPGVPPKRAR) carry the Nuclear localization signal motif. Arginine 19 carries the post-translational modification Omega-N-methylarginine. Lysine 573 is covalently cross-linked (Glycyl lysine isopeptide (Lys-Gly) (interchain with G-Cter in SUMO2)). Positions 1011, 1014, 1025, and 1028 each coordinate Zn(2+). The CysA-type zinc-finger motif lies at 1011–1028 (CIGCRTVLSHQGAVCKFC). [4Fe-4S] cluster contacts are provided by cysteine 1057, cysteine 1060, cysteine 1070, and cysteine 1075. The CysB motif signature appears at 1057–1075 (CQRCQGSLHEDVICTSRDC).

This sequence belongs to the DNA polymerase type-B family. As to quaternary structure, component of the tetrameric DNA polymerase delta complex (Pol-delta4), which consists of POLD1/p125, POLD2/p50, POLD3/p66/p68 and POLD4/p12, with POLD1 bearing both DNA polymerase and 3' to 5' proofreading exonuclease activities. Within Pol-delta4, directly interacts with POLD2 and POLD4. Following genotoxic stress by DNA-damaging agents, such as ultraviolet light and methyl methanesulfonate, or by replication stress induced by treatment with hydroxyurea or aphidicolin, Pol-delta4 is converted into a trimeric form of the complex (Pol-delta3) by POLD4 degradation. Pol-delta3 is the major form at S phase replication sites and DNA damage sites. POLD1 displays different catalytic properties depending upon the complex it is found in. It exhibits higher proofreading activity and fidelity than Pol-delta4, making it particularly well suited to respond to DNA damage. Directly interacts with PCNA, as do POLD3 and POLD4; this interaction stimulates Pol-delta4 polymerase activity. As POLD2 and POLD4, directly interacts with WRNIP1; this interaction stimulates DNA polymerase delta-mediated DNA synthesis, independently of the presence of PCNA. This stimulation may be due predominantly to an increase of initiation frequency and also to increased processivity. Also observed as a dimeric complex with POLD2 (Pol-delta2). Pol-delta2 is relatively insensitive to the PCNA stimulation (2-5-fold) compared to Pol-delta4 that is stimulated by over 50-fold. Interacts with POLDIP2; this interaction is indirect and most probably mediated through POLD2-binding. Interacts with CIAO1. Interacts with POLDIP2. Interacts with RFC1. [4Fe-4S] cluster is required as a cofactor.

The protein localises to the nucleus. The enzyme catalyses DNA(n) + a 2'-deoxyribonucleoside 5'-triphosphate = DNA(n+1) + diphosphate. With respect to regulation, regulated by alteration of quaternary structure. Exhibits burst rates of DNA synthesis are about 5 times faster in the presence of POLD4 (Pol-delta4 complex) than in its absence (Pol-delta3 complex), while the affinity of the enzyme for its DNA and dNTP substrates appears unchanged. The Pol-delta3 complex is more likely to proofread DNA synthesis because it cleaves single-stranded DNA twice as fast and transfers mismatched DNA from the polymerase to the exonuclease sites 9 times faster compared to the Pol-delta3 complex. Pol-delta3 also extends mismatched primers 3 times more slowly in the absence of POLD4. The conversion of Pol-delta4 into Pol-delta3 is induced by genotoxic stress or by replication stress leading POLD4 degradation. Stimulated in the presence of PCNA. This stimulation is further increased in the presence of KCTD13/PDIP1, most probably via direct interaction between KCTD13 and POLD2. In terms of biological role, as the catalytic component of the trimeric (Pol-delta3 complex) and tetrameric DNA polymerase delta complexes (Pol-delta4 complex), plays a crucial role in high fidelity genome replication, including in lagging strand synthesis, and repair. Exhibits both DNA polymerase and 3'- to 5'-exonuclease activities. Requires the presence of accessory proteins POLD2, POLD3 and POLD4 for full activity. Depending upon the absence (Pol-delta3) or the presence of POLD4 (Pol-delta4), displays differences in catalytic activity. Most notably, expresses higher proofreading activity in the context of Pol-delta3 compared with that of Pol-delta4. Although both Pol-delta3 and Pol-delta4 process Okazaki fragments in vitro, Pol-delta3 may be better suited to fulfill this task, exhibiting near-absence of strand displacement activity compared to Pol-delta4 and stalling on encounter with the 5'-blocking oligonucleotides. Pol-delta3 idling process may avoid the formation of a gap, while maintaining a nick that can be readily ligated. Along with DNA polymerase kappa, DNA polymerase delta carries out approximately half of nucleotide excision repair (NER) synthesis following UV irradiation. Under conditions of DNA replication stress, in the presence of POLD3 and POLD4, may catalyze the repair of broken replication forks through break-induced replication (BIR). Involved in the translesion synthesis (TLS) of templates carrying O6-methylguanine, 8oxoG or abasic sites. In Bos taurus (Bovine), this protein is DNA polymerase delta catalytic subunit (POLD1).